Here is a 189-residue protein sequence, read N- to C-terminus: Putative dihydrofolate reductase (189 aa).

The 183-residue stretch at 3–185 folds into the DHFR domain; it reads KMNLIVAMDA…LKFEFCKWKV (183 aa). Residues Ala9 and 15 to 21 each bind NADP(+); that span reads GIGKNGV. 29 to 34 provides a ligand contact to substrate; it reads DMQYFA. 53–55 contributes to the NADP(+) binding site; sequence RKC. Arg69 provides a ligand contact to substrate. NADP(+)-binding positions include 75 to 77 and 115 to 122; these read SRQ and GGAEIYDL.

It belongs to the dihydrofolate reductase family.

The catalysed reaction is (6S)-5,6,7,8-tetrahydrofolate + NADP(+) = 7,8-dihydrofolate + NADPH + H(+). It functions in the pathway cofactor biosynthesis; tetrahydrofolate biosynthesis; 5,6,7,8-tetrahydrofolate from 7,8-dihydrofolate: step 1/1. Its function is as follows. Key enzyme in folate metabolism. Catalyzes an essential reaction for de novo glycine and purine synthesis, and for DNA precursor synthesis. This is Putative dihydrofolate reductase (dhfr-1) from Caenorhabditis elegans.